The chain runs to 320 residues: o-succinylbenzoate synthase (320 aa).

The active-site Proton donor is the Lys133. Residues Asp161, Glu190, and Asp213 each contribute to the Mg(2+) site. Lys235 serves as the catalytic Proton acceptor.

The protein belongs to the mandelate racemase/muconate lactonizing enzyme family. MenC type 1 subfamily. A divalent metal cation is required as a cofactor.

The enzyme catalyses (1R,6R)-6-hydroxy-2-succinyl-cyclohexa-2,4-diene-1-carboxylate = 2-succinylbenzoate + H2O. The protein operates within quinol/quinone metabolism; 1,4-dihydroxy-2-naphthoate biosynthesis; 1,4-dihydroxy-2-naphthoate from chorismate: step 4/7. Its pathway is quinol/quinone metabolism; menaquinone biosynthesis. In terms of biological role, converts 2-succinyl-6-hydroxy-2,4-cyclohexadiene-1-carboxylate (SHCHC) to 2-succinylbenzoate (OSB). In Shigella flexneri, this protein is o-succinylbenzoate synthase.